The primary structure comprises 526 residues: Bifunctional purine biosynthesis protein PurH (526 aa).

The MGS-like domain occupies 1–148; it reads MSLNNIIKNA…KNYKDVIVIV (148 aa).

It belongs to the PurH family.

The catalysed reaction is (6R)-10-formyltetrahydrofolate + 5-amino-1-(5-phospho-beta-D-ribosyl)imidazole-4-carboxamide = 5-formamido-1-(5-phospho-D-ribosyl)imidazole-4-carboxamide + (6S)-5,6,7,8-tetrahydrofolate. It catalyses the reaction IMP + H2O = 5-formamido-1-(5-phospho-D-ribosyl)imidazole-4-carboxamide. It functions in the pathway purine metabolism; IMP biosynthesis via de novo pathway; 5-formamido-1-(5-phospho-D-ribosyl)imidazole-4-carboxamide from 5-amino-1-(5-phospho-D-ribosyl)imidazole-4-carboxamide (10-formyl THF route): step 1/1. It participates in purine metabolism; IMP biosynthesis via de novo pathway; IMP from 5-formamido-1-(5-phospho-D-ribosyl)imidazole-4-carboxamide: step 1/1. This Buchnera aphidicola subsp. Schizaphis graminum (strain Sg) protein is Bifunctional purine biosynthesis protein PurH.